The sequence spans 574 residues: Sentrin-specific protease 3 (574 aa).

Positions 1–125 (MKETIQGTGS…PTHRKTCSQR (125 aa)) are disordered. 3 positions are modified to phosphoserine: serine 54, serine 73, and serine 75. Positions 74 to 93 (ASEEEEEEEEEEDEDEEEEV) are enriched in acidic residues. Basic residues predominate over residues 112–125 (RPSRPTHRKTCSQR). 2 consecutive short sequence motifs (nuclear localization signal) follow at residues 125 to 128 (RRRR) and 153 to 159 (RHRGRRR). The interval 161–181 (LAHPKNHLSPQQGGATPQVPS) is disordered. Serine 169 is subject to Phosphoserine. Threonine 176 carries the post-translational modification Phosphothreonine. Phosphoserine is present on residues serine 181, serine 188, serine 212, and serine 232. Positions 386–543 (HVLTMDDLGT…AFVLQYCKHL (158 aa)) are protease. Catalysis depends on residues histidine 465 and aspartate 482. Cysteine 532 functions as the Nucleophile in the catalytic mechanism.

Belongs to the peptidase C48 family. In terms of assembly, component of some MLL1/MLL complex, at least composed of the core components KMT2A/MLL1, ASH2L, HCFC1/HCF1, WDR5 and RBBP5, as well as the facultative components BACC1, CHD8, E2F6, HSP70, INO80C, KANSL1, LAS1L, MAX, MCRS1, MGA, MYST1/MOF, PELP1, PHF20, PRP31, RING2, RUVB1/TIP49A, RUVB2/TIP49B, SENP3, TAF1, TAF4, TAF6, TAF7, TAF9 and TEX10. Interacts with EP300, NPM1 and CDCA8. Component of the 5FMC complex, at least composed of PELP1, LAS1L, TEX10, WDR18 and SENP3; the complex interacts with methylated CHTOP and ZNF148. Interacts with NOL9. Interacts with CCAR2.

It localises to the nucleus. It is found in the nucleolus. The protein resides in the nucleoplasm. Its subcellular location is the cytoplasm. With respect to regulation, on oxidative stress, SENP3 degradation is blocked by inhibition of its ubiquitination, which stabilizes it as it accumulates in the nucleoplasm. Its function is as follows. Protease that releases SUMO2 and SUMO3 monomers from sumoylated substrates, but has only weak activity against SUMO1 conjugates. Deconjugates SUMO2 from MEF2D, which increases its transcriptional activation capability. Deconjugates SUMO2 and SUMO3 from CDCA8. Redox sensor that, when redistributed into nucleoplasm, can act as an effector to enhance HIF1A transcriptional activity by desumoylating EP300. Required for rRNA processing through deconjugation of SUMO2 and SUMO3 from nucleophosmin, NPM1. Plays a role in the regulation of sumoylation status of ZNF148. Functions as a component of the Five Friends of Methylated CHTOP (5FMC) complex; the 5FMC complex is recruited to ZNF148 by methylated CHTOP, leading to desumoylation of ZNF148 and subsequent transactivation of ZNF148 target genes. Deconjugates SUMO2 from KAT5. Catalyzes desumoylation of MRE11. The protein is Sentrin-specific protease 3 of Homo sapiens (Human).